The following is a 444-amino-acid chain: MFALGIYLWETIVFFSLAASQQAAARKAASPMPPSEFLDKLMGKVSGYDARIRPNFKGPPVNVTCNIFINSFGSIAETTMDYRVNIFLRQQWNDPRLAYSEYPDDSLDLDPSMLDSIWKPDLFFANEKGANFHEVTTDNKLLRISKNGNVLYSIRITLVLACPMDLKNFPMDVQTCIMQLESFGYTMNDLIFEWDEKGAVQVADGLTLPQFILKEEKDLRYCTKHYNTGKFTCIEARFHLERQMGYYLIQMYIPSLLIVILSWVSFWINMDAAPARVGLGITTVLTMTTQSSGSRASLPKVSYVKAIDIWMAVCLLFVFSALLEYAAVNFIARQHKELLRFQRRRRHLKEDEAGDGRFSFAAYGMGPACLQAKDGMAIKGNNNNAPTSTNPPEKTVEEMRKLFISRAKRIDTVSRVAFPLVFLIFNIFYWITYKIIRSEDIHKQ.

A signal peptide spans M1–A24. The Extracellular portion of the chain corresponds to A25 to Y246. N62 is a glycosylation site (N-linked (GlcNAc...) asparagine). Glycine-binding residues include R89 and S153. The cysteines at positions 162 and 176 are disulfide-linked. Zn(2+) is bound by residues E216 and D218. Residues C222 and C233 are joined by a disulfide bond. Y226 to F231 contacts strychnine. T228 contributes to the glycine binding site. Residue H239 coordinates Zn(2+). The helical transmembrane segment at Y247 to I268 threads the bilayer. The Cytoplasmic segment spans residues N269 to A273. A helical transmembrane segment spans residues P274 to S294. Residues R295–K305 lie on the Extracellular side of the membrane. A helical membrane pass occupies residues A306–A326. Residues A327 to T412 lie on the Cytoplasmic side of the membrane. The chain crosses the membrane as a helical span at residues V413 to Y433. Topologically, residues K434–Q444 are extracellular.

The protein belongs to the ligand-gated ion channel (TC 1.A.9) family. Glycine receptor (TC 1.A.9.3) subfamily. GLRA1 sub-subfamily. Homopentamer (in vitro). Heteropentamer composed of glra1 and glrb. Both homopentamers and heteropentamers form functional ion channels. Interacts with glrb. Expressed in brain.

It localises to the postsynaptic cell membrane. It is found in the synapse. Its subcellular location is the perikaryon. The protein localises to the cell projection. The protein resides in the dendrite. It localises to the cell membrane. The enzyme catalyses chloride(in) = chloride(out). Its activity is regulated as follows. Activated by glycine and taurine. Inhibited by strychnine. Allosterically activated by ivermectin. Inhibited by picrotoxinin. Strychnine binding locks the channel in a closed conformation and prevents channel opening in response to extracellular glycine. Can also be activated by GABA and inhibited by bicuculline, but this requires heterologous expression in human cells. Functionally, subunit of heteromeric glycine-gated chloride channels. Plays an important role in the down-regulation of neuronal excitability. Contributes to the generation of inhibitory postsynaptic currents. Channel activity is potentiated by ethanol. This Danio rerio (Zebrafish) protein is Glycine receptor subunit alphaZ1 (glra1).